The sequence spans 366 residues: Major outer membrane protein (366 aa).

The first 21 residues, 1-21, serve as a signal peptide directing secretion; that stretch reads MKKTLLATAIAGAMAASGAQA.

Belongs to the Gram-negative porin family. As to quaternary structure, homotrimer.

It is found in the cell outer membrane. This Halomonas elongata (strain ATCC 33173 / DSM 2581 / NBRC 15536 / NCIMB 2198 / 1H9) protein is Major outer membrane protein.